The chain runs to 110 residues: Protein YcgL (110 aa).

The 85-residue stretch at 14 to 98 folds into the YcgL domain; the sequence is MFCVIYRSSK…PPEDLLKQHL (85 aa). The interval 87–110 is disordered; it reads PPPPEDLLKQHLSSVGQNTSPADR. Positions 97-110 are enriched in polar residues; the sequence is HLSSVGQNTSPADR.

The chain is Protein YcgL from Salmonella choleraesuis (strain SC-B67).